The primary structure comprises 266 residues: Stomatin homolog PH1511 (266 aa).

Residues 7-27 (FFVTSIILLFILIFLASAIKI) traverse the membrane as a helical segment. 2 coiled-coil regions span residues 125-152 (GQAHLDELLSERDKLNMQLQRIIDEATD) and 178-213 (RQAEAERERRARITLAEAERQAAEKLREAAEIISEH).

The protein belongs to the band 7/mec-2 family. As to quaternary structure, homotrimer. Interacts with PH1510 and is cleaved by PH1510.

It localises to the membrane. The protein is Stomatin homolog PH1511 of Pyrococcus horikoshii (strain ATCC 700860 / DSM 12428 / JCM 9974 / NBRC 100139 / OT-3).